The sequence spans 261 residues: WW domain-binding protein 2 (261 aa).

One can recognise a GRAM domain in the interval 1-84 (MALNKNHSEG…YLMKDCEIKQ (84 aa)). Residue Y192 is modified to Phosphotyrosine; by YES and SRC. The PPxY motif 1 signature appears at 196–200 (PPPPY). The span at 196-209 (PPPPYPGPMEPPVS) shows a compositional bias: pro residues. Residues 196–261 (PPPPYPGPME…YYPPEDKKTQ (66 aa)) form a disordered region. Positions 218 to 230 (AAEAKAAEAAASA) are enriched in low complexity. At Y231 the chain carries Phosphotyrosine; by YES and SRC. The segment covering 245-254 (SQPPPPPYYP) has biased composition (pro residues). The PPxY motif 2 signature appears at 248-252 (PPPPY).

As to quaternary structure, binds to the WW domain of YAP1, WWP1 and WWP2. Interacts with NEDD4. Interacts with ESR1 and UBE3A. Phosphorylated in repsonse to EGF as well as estrogen and progesterone hormones. Tyr-192 and Tyr-231 are phosphorylated by YES and SRC inducing nuclear translocation. In terms of tissue distribution, ubiquitous.

The protein localises to the cytoplasm. It localises to the nucleus. Its function is as follows. Acts as a transcriptional coactivator of estrogen and progesterone receptors (ESR1 and PGR) upon hormone activation. In presence of estrogen, binds to ESR1-responsive promoters. Synergizes with YAP1 to enhance PGR activity. Modulates expression of post-synaptic scaffolding proteins via regulation of ESR1, ESR2 and PGR. The sequence is that of WW domain-binding protein 2 from Homo sapiens (Human).